The chain runs to 348 residues: Endoplasmic reticulum junction formation protein lunapark-A (348 aa).

The Cytoplasmic segment spans residues 1–43 (MSVFCLQAKPTTVEILEGIDKDIQILEDYSVKYQRQMKAVVGR). The helical transmembrane segment at 44 to 64 (LLLYSILLYLMAGVVVYSWYL) threads the bilayer. Topologically, residues 65-67 (PEQ) are lumenal. A helical membrane pass occupies residues 68-88 (LMGRLVLGLPFLLFPLLVWIL). The Cytoplasmic segment spans residues 89-348 (RKVLILFFAR…EEDKQSDSGD (260 aa)). Positions 105–126 (FKLEDLKAQKRKILEDVMETET) form a coiled coil. Positions 142–211 (KKKTDFDSTP…HSAPGGPPER (70 aa)) are disordered. The segment at 277 to 302 (CQQCLSHNGMALKEEFEYVAFRCAYC) adopts a C4-type; plays a role in ER morphology zinc-finger fold. The disordered stretch occupies residues 313 to 348 (PQAPRLPETAGEPKLPCDLNSSSCAAEEDKQSDSGD). The span at 339-348 (EEDKQSDSGD) shows a compositional bias: basic and acidic residues.

It belongs to the lunapark family. Homodimer; homodimerization requires the C4-type zinc finger motif and decreases during mitosis in a phosphorylation-dependent manner. Phosphorylated. Phosphorylation occurs during interphase. Phosphorylation also occurs during mitosis; these phosphorylations reduce both its homodimerization and the ER three-way tubular junction formation.

The protein localises to the endoplasmic reticulum membrane. Endoplasmic reticulum (ER)-shaping membrane protein that plays a role in determining ER morphology. Involved in the stabilization of nascent three-way ER tubular junctions within the ER network. May also play a role as a curvature-stabilizing protein within three-way ER tubular junction network. The polypeptide is Endoplasmic reticulum junction formation protein lunapark-A (lnpka) (Takifugu rubripes (Japanese pufferfish)).